The sequence spans 172 residues: Cytidylate kinase (172 aa).

Glycine 8–threonine 16 is an ATP binding site.

It belongs to the cytidylate kinase family. Type 2 subfamily.

It is found in the cytoplasm. The catalysed reaction is CMP + ATP = CDP + ADP. It carries out the reaction dCMP + ATP = dCDP + ADP. The sequence is that of Cytidylate kinase from Ignicoccus hospitalis (strain KIN4/I / DSM 18386 / JCM 14125).